The primary structure comprises 627 residues: Nuclear receptor subfamily 4 group A member 3 (627 aa).

The activation function (AF)-1 domain stretch occupies residues 1–112; the sequence is MPCVQAQYSP…HHHHHHHHHQ (112 aa). A required for DNA-PK heterotrimer region spans residues 1-139; that stretch reads MPCVQAQYSP…PSTSMYFKQS (139 aa). The tract at residues 1-292 is interaction with NCOA1, NCOA2, NCOA3 and KAT2B; the sequence is MPCVQAQYSP…NRSSSSGEGT (292 aa). 2 disordered regions span residues 96–162 and 268–289; these read HGYH…DELP and ASSL…SSSG. A compositionally biased stretch (basic residues) spans 97–112; that stretch reads GYHHHHHHHHHHHHHQ. Over residues 141-150 the composition is skewed to pro residues; the sequence is PSTPTTPGFP. The segment covering 269–288 has biased composition (low complexity); the sequence is SSLLGESPSLPSPPNRSSSS. Residues 290-365 constitute a DNA-binding region (nuclear receptor); that stretch reads EGTCAVCGDN…VGMVKEVVRT (76 aa). 2 consecutive NR C4-type zinc fingers follow at residues 293-313 and 329-353; these read CAVC…CEGC and CLAN…FQKC. The interval 365 to 395 is disordered; the sequence is TDSLKGRRGRLPSKPKSPLQQEPSQPSPPSP. Low complexity predominate over residues 378-388; that stretch reads KPKSPLQQEPS. Residues 380–627 are interaction with KAT2B; it reads KSPLQQEPSQ…DKLFLDTLPF (248 aa). Positions 395–624 constitute an NR LBD domain; sequence PPICMMNALV…SVIDKLFLDT (230 aa).

It belongs to the nuclear hormone receptor family. NR4 subfamily. In terms of assembly, interacts with SIX3 (via homeobox); differentially regulates the transcriptional activities of NR4A3. Interacts with NCOA2; potentiates the activity of the NR4A3. Interacts with NCOA1, NCOA3, MED1 and KAT2B. Interacts with EP300 and NCOA2; mediates the recruitment of MED1 in the coactivator complex. Interacts with the constituents of DNA-PK heterotrimer PRKDC, XRCC6 and XRCC5; phosphorylates and prevents NR4A3 ubiquitinylation and degradation. Interacts with NR3C1 (via nuclear receptor DNA-binding domain); the interactions represses transcription activity of NR4A3 on the POMC promoter Nur response element (NurRE). Interacts with TRIM28; the interactions potentiates NR4A3 activity on NurRE promoter. Binds DNA as a monomer and homodimer. Interacts with PARP1; activates PARP1 by improving acetylation of PARP1 and suppressing the interaction between PARP1 and SIRT1. In terms of processing, phosphorylated by PRKDC. As to expression, ubiquitous. Highest levels of expression in brain. Widely expressed throughout the arcuate nucleus region of the hypothalamus, namely in AgRP neurons.

It is found in the nucleus. Functionally, transcriptional activator that binds to regulatory elements in promoter regions in a cell- and response element (target)-specific manner. Induces gene expression by binding as monomers to the NR4A1 response element (NBRE) 5'-AAAAGGTCA-3' site and as homodimers to the Nur response element (NurRE) site in the promoter of their regulated target genes. Plays a role in the regulation of proliferation, survival and differentiation of many different cell types and also in metabolism and inflammation. Mediates proliferation of vascular smooth muscle, myeloid progenitor cell and type B pancreatic cells; promotes mitogen-induced vascular smooth muscle cell proliferation through transactivation of SKP2 promoter by binding a NBRE site. Upon PDGF stimulation, stimulates vascular smooth muscle cell proliferation by regulating CCND1 and CCND2 expression. In islets, induces type B pancreatic cell proliferation through up-regulation of genes that activate cell cycle, as well as genes that cause degradation of the CDKN1A. Negatively regulates myeloid progenitor cell proliferation by repressing RUNX1 in a NBRE site-independent manner. During inner ear, plays a role as a key mediator of the proliferative growth phase of semicircular canal development. Also mediates survival of neuron and smooth muscle cells; mediates CREB-induced neuronal survival, and during hippocampus development, plays a critical role in pyramidal cell survival and axonal guidance. Is required for S phase entry of the cell cycle and survival of smooth muscle cells by inducing CCND1, resulting in RB1 phosphorylation. Binds to NBRE motif in CCND1 promoter, resulting in the activation of the promoter and CCND1 transcription. Also plays a role in inflammation; upon TNF stimulation, mediates monocyte adhesion by inducing the expression of VCAM1 and ICAM1 by binding to the NBRE consensus site. In mast cells activated by Fc-epsilon receptor cross-linking, promotes the synthesis and release of cytokines but impairs events leading to degranulation. Also plays a role in metabolism; by modulating feeding behavior; and by playing a role in energy balance by inhibiting the glucocorticoid-induced orexigenic neuropeptides AGRP expression, at least in part by forming a complex with activated NR3C1 on the AGRP- glucocorticoid response element (GRE), and thus weakening the DNA binding activity of NR3C1. Upon catecholamines stimulation, regulates gene expression that controls oxidative metabolism in skeletal muscle. Plays a role in glucose transport by regulating translocation of the SLC2A4 glucose transporter to the cell surface. Finally, during gastrulation plays a crucial role in the formation of anterior mesoderm by controlling cell migration. Inhibits adipogenesis. Also participates in cardiac hypertrophy by activating PARP1. This is Nuclear receptor subfamily 4 group A member 3 (Nr4a3) from Mus musculus (Mouse).